A 428-amino-acid chain; its full sequence is Phosphomethylpyrimidine synthase 1 (428 aa).

Residues Asn-65, Met-94, Tyr-123, His-158, Ser-180 to Gly-182, Asp-221 to Arg-224, and Glu-260 each bind substrate. His-264 contacts Zn(2+). Tyr-287 lines the substrate pocket. His-328 is a binding site for Zn(2+). Positions 405, 408, and 412 each coordinate [4Fe-4S] cluster.

The protein belongs to the ThiC family. It depends on [4Fe-4S] cluster as a cofactor.

It catalyses the reaction 5-amino-1-(5-phospho-beta-D-ribosyl)imidazole + S-adenosyl-L-methionine = 4-amino-2-methyl-5-(phosphooxymethyl)pyrimidine + CO + 5'-deoxyadenosine + formate + L-methionine + 3 H(+). It functions in the pathway cofactor biosynthesis; thiamine diphosphate biosynthesis. Functionally, catalyzes the synthesis of the hydroxymethylpyrimidine phosphate (HMP-P) moiety of thiamine from aminoimidazole ribotide (AIR) in a radical S-adenosyl-L-methionine (SAM)-dependent reaction. In Methanosarcina mazei (strain ATCC BAA-159 / DSM 3647 / Goe1 / Go1 / JCM 11833 / OCM 88) (Methanosarcina frisia), this protein is Phosphomethylpyrimidine synthase 1.